Here is a 487-residue protein sequence, read N- to C-terminus: WRKY transcription factor 1 (487 aa).

The segment at 69-104 (QSEVDVASPVSEKAPKVSESSGALSLQSGSEGNSPF) is disordered. Position 76 is a phosphoserine (S76). A compositionally biased stretch (polar residues) spans 86 to 101 (SESSGALSLQSGSEGN). The WRKY 1 DNA-binding region spans 105–169 (IREKVMEDGY…YFGEHDHPKP (65 aa)). The Zn(2+) site is built by C136, C141, H164, and H166. The segment at 255–287 (SSRITGDNTHKDYNSPTAKRRKKGGNIELSPVE) is disordered. Residues 273-277 (KRRKK) carry the Nuclear localization signal motif. A DNA-binding region (WRKY 2) is located at residues 301–366 (TLFDIVNDGY…YEGKHDHDMP (66 aa)). Positions 332, 337, 361, and 363 each coordinate Zn(2+). The segment at 380 to 487 (EVDDKEGDAN…QKPKTEPAQS (108 aa)) is disordered. The span at 390–401 (KTPQSSTLQSIT) shows a compositional bias: polar residues. 2 stretches are compositionally biased toward basic and acidic residues: residues 429–462 (LDEKLKEEIKERSDANKDHAANHAKPEAKSDDKT) and 476–487 (EEQKPKTEPAQS).

It belongs to the WRKY group I family. As to expression, expressed to similar levels in root and flower, to a somewhat lower level in stem and to low levels in leaf and siliques.

It is found in the nucleus. Its function is as follows. Transcription factor. Binds to a 5'-CGTTGACCGAG-3' consensus core sequence which contains a W box, a frequently occurring elicitor-responsive cis-acting element. This is WRKY transcription factor 1 from Arabidopsis thaliana (Mouse-ear cress).